Reading from the N-terminus, the 448-residue chain is Exodeoxyribonuclease 7 large subunit (448 aa).

It belongs to the XseA family. In terms of assembly, heterooligomer composed of large and small subunits.

It localises to the cytoplasm. It carries out the reaction Exonucleolytic cleavage in either 5'- to 3'- or 3'- to 5'-direction to yield nucleoside 5'-phosphates.. In terms of biological role, bidirectionally degrades single-stranded DNA into large acid-insoluble oligonucleotides, which are then degraded further into small acid-soluble oligonucleotides. The chain is Exodeoxyribonuclease 7 large subunit from Histophilus somni (strain 129Pt) (Haemophilus somnus).